The following is a 191-amino-acid chain: Large ribosomal subunit protein bL12cz (191 aa).

The transit peptide at 1–58 (MASTTLSIATTIRSSSYPTLASINHFPSRTTTIEFPSRFGGGSSSTLTHRATHLRPIA) directs the protein to the chloroplast.

This sequence belongs to the bacterial ribosomal protein bL12 family.

The protein resides in the plastid. It is found in the chloroplast. This Arabidopsis thaliana (Mouse-ear cress) protein is Large ribosomal subunit protein bL12cz (RPL12A).